An 858-amino-acid polypeptide reads, in one-letter code: Lysine-specific demethylase JMJ706 (858 aa).

A JmjN domain is found at 103-144; that stretch reads CPVYYPTKEEFEDPIGYIQKIAPVASKYGICKIVSPVSASVP. Residues 250–420 form the JmjC domain; sequence KSNWNLKNFS…LGSVASRRYA (171 aa). 3 residues coordinate Fe cation: His293, Glu295, and His388. Residues 737 to 746 are compositionally biased toward basic and acidic residues; sequence QHNKRPEDYG. Disordered regions lie at residues 737–791 and 829–858; these read QHNK…SAKQ and SSST…WPAI. Residues 829–844 are compositionally biased toward polar residues; that stretch reads SSSTNRVVEQGSSGQR.

Requires Fe(2+) as cofactor.

Its subcellular location is the nucleus. It catalyses the reaction N(6),N(6),N(6)-trimethyl-L-lysyl(9)-[histone H3] + 2 2-oxoglutarate + 2 O2 = N(6)-methyl-L-lysyl(9)-[histone H3] + 2 formaldehyde + 2 succinate + 2 CO2. Histone demethylase that demethylates 'Lys-9' (H3K9me) of histone H3 with a specific activity for H3K9me3 and H3K9me2. No activity on H3K4me3, H3K9me1, H3K27me2 and H3K36me3/2. Involved in the control of floral organ development by demethylating H3K9me3 and H3K9me2 in the promoter regions of DH1 and MADS47. The 'Lys-9' demethylation of these two genes is required for induction of their expression. This is Lysine-specific demethylase JMJ706 (JMJ706) from Oryza sativa subsp. japonica (Rice).